Reading from the N-terminus, the 306-residue chain is Methionyl-tRNA formyltransferase (306 aa).

108–111 provides a ligand contact to (6S)-5,6,7,8-tetrahydrofolate; that stretch reads SLLP.

It belongs to the Fmt family.

It carries out the reaction L-methionyl-tRNA(fMet) + (6R)-10-formyltetrahydrofolate = N-formyl-L-methionyl-tRNA(fMet) + (6S)-5,6,7,8-tetrahydrofolate + H(+). Attaches a formyl group to the free amino group of methionyl-tRNA(fMet). The formyl group appears to play a dual role in the initiator identity of N-formylmethionyl-tRNA by promoting its recognition by IF2 and preventing the misappropriation of this tRNA by the elongation apparatus. This is Methionyl-tRNA formyltransferase from Arthrobacter sp. (strain FB24).